We begin with the raw amino-acid sequence, 438 residues long: Probable inactive protein kinase 38 (438 aa).

The Protein kinase domain occupies 77–340; the sequence is PRFRLALGKG…FTELQPQYFL (264 aa).

Belongs to the protein kinase superfamily. Tyr protein kinase family.

This chain is Probable inactive protein kinase 38 (36), found in Equus caballus (Horse).